We begin with the raw amino-acid sequence, 308 residues long: Oxygen-dependent coproporphyrinogen-III oxidase (308 aa).

S92 is a binding site for substrate. Residues H96 and H106 each coordinate a divalent metal cation. The active-site Proton donor is the H106. N108 to R110 is a substrate binding site. Positions 145 and 175 each coordinate a divalent metal cation. Residues Y240–E275 are important for dimerization. Residue G258–R260 participates in substrate binding.

Belongs to the aerobic coproporphyrinogen-III oxidase family. Homodimer. A divalent metal cation serves as cofactor.

The protein resides in the cytoplasm. It catalyses the reaction coproporphyrinogen III + O2 + 2 H(+) = protoporphyrinogen IX + 2 CO2 + 2 H2O. It participates in porphyrin-containing compound metabolism; protoporphyrin-IX biosynthesis; protoporphyrinogen-IX from coproporphyrinogen-III (O2 route): step 1/1. Its function is as follows. Involved in the heme biosynthesis. Catalyzes the aerobic oxidative decarboxylation of propionate groups of rings A and B of coproporphyrinogen-III to yield the vinyl groups in protoporphyrinogen-IX. This Salmonella paratyphi A (strain ATCC 9150 / SARB42) protein is Oxygen-dependent coproporphyrinogen-III oxidase.